A 391-amino-acid chain; its full sequence is 8-amino-7-oxononanoate synthase (391 aa).

Arg-19 contacts substrate. 106 to 107 is a pyridoxal 5'-phosphate binding site; the sequence is GY. Residue His-131 participates in substrate binding. Positions 178, 206, and 234 each coordinate pyridoxal 5'-phosphate. At Lys-237 the chain carries N6-(pyridoxal phosphate)lysine. Substrate is bound at residue Thr-353.

This sequence belongs to the class-II pyridoxal-phosphate-dependent aminotransferase family. BioF subfamily. In terms of assembly, homodimer. Pyridoxal 5'-phosphate is required as a cofactor.

It carries out the reaction 6-carboxyhexanoyl-[ACP] + L-alanine + H(+) = (8S)-8-amino-7-oxononanoate + holo-[ACP] + CO2. Its pathway is cofactor biosynthesis; biotin biosynthesis. Functionally, catalyzes the decarboxylative condensation of pimeloyl-[acyl-carrier protein] and L-alanine to produce 8-amino-7-oxononanoate (AON), [acyl-carrier protein], and carbon dioxide. The chain is 8-amino-7-oxononanoate synthase from Geobacter metallireducens (strain ATCC 53774 / DSM 7210 / GS-15).